Consider the following 224-residue polypeptide: MNNYNMNPSLFQNYTWNNIINSSNNNNKNDDHHHQHNNDPIGMAMDQYTQLHIFNPFSSSHFPPLSSSLTTTTLLSGDQEDDEDEEEPLEELGAMKEMMYKIAAMQSVDIDPATVKKPKRRNVRISDDPQSVAARHRRERISERIRILQRLVPGGTKMDTASMLDEAIRYVKFLKRQIRLLNNNTGYTPPPPQDQASQAVTTSWVSPPPPPSFGRGGRGVGELI.

Disordered regions lie at residues 22–42 and 68–88; these read SSNNNNKNDDHHHQHNNDPIG and SLTTTTLLSGDQEDDEDEEEP. Over residues 28–37 the composition is skewed to basic and acidic residues; sequence KNDDHHHQHN. Residues 68–77 show a composition bias toward low complexity; sequence SLTTTTLLSG. A compositionally biased stretch (acidic residues) spans 78–88; the sequence is DQEDDEDEEEP. A bHLH domain is found at 125–174; sequence ISDDPQSVAARHRRERISERIRILQRLVPGGTKMDTASMLDEAIRYVKFL. The interval 183–224 is disordered; it reads NNTGYTPPPPQDQASQAVTTSWVSPPPPPSFGRGGRGVGELI. Positions 194–204 are enriched in polar residues; the sequence is DQASQAVTTSW. The span at 214 to 224 shows a compositional bias: gly residues; it reads GRGGRGVGELI.

Homodimer. Interacts with SPT. As to expression, gynoecium.

Its subcellular location is the nucleus. Functionally, required for the female reproductive tract development and fertility. The sequence is that of Transcription factor HEC3 (HEC3) from Arabidopsis thaliana (Mouse-ear cress).